Here is a 167-residue protein sequence, read N- to C-terminus: Translationally-controlled tumor protein homolog (167 aa).

A TCTP domain is found at 1 to 167; it reads MIIFTDVISG…WKHGVSEDKI (167 aa).

The protein belongs to the TCTP family.

The protein localises to the cytoplasm. It localises to the cytoskeleton. In terms of biological role, involved in protein synthesis. Involved in microtubule stabilization. In Debaryomyces hansenii (strain ATCC 36239 / CBS 767 / BCRC 21394 / JCM 1990 / NBRC 0083 / IGC 2968) (Yeast), this protein is Translationally-controlled tumor protein homolog.